The chain runs to 159 residues: MKFLVILTLCIAGAIAHCDKAPFIKASWNQVKHNEVDILYTVFKAYPEIQDRFPQFAGKDLEAIKETAEFAVHSTRIVSFMSEIVSLVGNPAVQSSIDLLLVKMANDHKARGVTKELFEKFNIAFMGYLKSHTTWDKKTENAWKVVGDEHHAIVYSILE.

The N-terminal stretch at 1 to 16 (MKFLVILTLCIAGAIA) is a signal peptide. Positions 17–159 (HCDKAPFIKA…HHAIVYSILE (143 aa)) constitute a Globin domain. Histidine 73 and histidine 108 together coordinate heme b.

It belongs to the globin family.

The sequence is that of Globin CTT-W (CTT-W) from Chironomus thummi thummi (Midge).